The following is a 324-amino-acid chain: tRNA dimethylallyltransferase (324 aa).

ATP is bound at residue 20 to 27 (GPTASGKS). 22 to 27 (TASGKS) provides a ligand contact to substrate. Interaction with substrate tRNA regions lie at residues 45-48 (DSAL), 168-172 (QRLIR), and 284-291 (KRQITWLR).

Belongs to the IPP transferase family. As to quaternary structure, monomer. Mg(2+) is required as a cofactor.

The enzyme catalyses adenosine(37) in tRNA + dimethylallyl diphosphate = N(6)-dimethylallyladenosine(37) in tRNA + diphosphate. In terms of biological role, catalyzes the transfer of a dimethylallyl group onto the adenine at position 37 in tRNAs that read codons beginning with uridine, leading to the formation of N6-(dimethylallyl)adenosine (i(6)A). The sequence is that of tRNA dimethylallyltransferase from Hydrogenovibrio crunogenus (strain DSM 25203 / XCL-2) (Thiomicrospira crunogena).